The following is a 232-amino-acid chain: Octanoyltransferase (232 aa).

The region spanning 44 to 219 (EYTADEIWVV…QLARQFGLVL (176 aa)) is the BPL/LPL catalytic domain. Substrate is bound by residues 83–90 (RGGQVTYH), 150–152 (ALG), and 163–165 (GLS). The Acyl-thioester intermediate role is filled by C181.

The protein belongs to the LipB family.

Its subcellular location is the cytoplasm. It catalyses the reaction octanoyl-[ACP] + L-lysyl-[protein] = N(6)-octanoyl-L-lysyl-[protein] + holo-[ACP] + H(+). It participates in protein modification; protein lipoylation via endogenous pathway; protein N(6)-(lipoyl)lysine from octanoyl-[acyl-carrier-protein]: step 1/2. In terms of biological role, catalyzes the transfer of endogenously produced octanoic acid from octanoyl-acyl-carrier-protein onto the lipoyl domains of lipoate-dependent enzymes. Lipoyl-ACP can also act as a substrate although octanoyl-ACP is likely to be the physiological substrate. The polypeptide is Octanoyltransferase (Xanthomonas axonopodis pv. citri (strain 306)).